Here is a 96-residue protein sequence, read N- to C-terminus: Co-chaperonin GroES (96 aa).

It belongs to the GroES chaperonin family. Heptamer of 7 subunits arranged in a ring. Interacts with the chaperonin GroEL.

Its subcellular location is the cytoplasm. In terms of biological role, together with the chaperonin GroEL, plays an essential role in assisting protein folding. The GroEL-GroES system forms a nano-cage that allows encapsulation of the non-native substrate proteins and provides a physical environment optimized to promote and accelerate protein folding. GroES binds to the apical surface of the GroEL ring, thereby capping the opening of the GroEL channel. The sequence is that of Co-chaperonin GroES from Hydrogenovibrio crunogenus (strain DSM 25203 / XCL-2) (Thiomicrospira crunogena).